A 173-amino-acid polypeptide reads, in one-letter code: Bifunctional protein PyrR (173 aa).

Residues 93–105 (VILVDDVLYTGRT) carry the PRPP-binding motif.

It belongs to the purine/pyrimidine phosphoribosyltransferase family. PyrR subfamily. In terms of assembly, homodimer and homohexamer; in equilibrium.

The enzyme catalyses UMP + diphosphate = 5-phospho-alpha-D-ribose 1-diphosphate + uracil. Regulates transcriptional attenuation of the pyrimidine nucleotide (pyr) operon by binding in a uridine-dependent manner to specific sites on pyr mRNA. This disrupts an antiterminator hairpin in the RNA and favors formation of a downstream transcription terminator, leading to a reduced expression of downstream genes. Functionally, also displays a weak uracil phosphoribosyltransferase activity which is not physiologically significant. This Streptococcus thermophilus (strain ATCC BAA-491 / LMD-9) protein is Bifunctional protein PyrR.